The chain runs to 289 residues: MSTPYLLIDAGNSRVKWALVQADGTQTHSGAFSHGGQLVKGTGDPLQSRHEPDWSALPAPGSAWLSNVAGDAVARRIDAFIDRHWPGLARTTVRSAAQQCGVTNAYTTPSQLGSDRWAGMIGARAAFPGEPLLIATFGTATTLEALTADGVFVGGLIAPGWSLMMRSLGEHTAQLPTLDSTAARGLLDGDNAAGQREPAERGAWFATDTPRSLSSGCALAQIGLIERMWRHLQDEWQVSVRLVVGGGAAGELVQALSVPYTRHDSLVLAGLALIAAQAPVYPSTHTRPV.

Residue 9 to 16 (DAGNSRVK) coordinates ATP. Substrate contacts are provided by residues Tyr106 and 113–116 (GSDR). Residue Asp115 is the Proton acceptor of the active site. Thr139 serves as a coordination point for ATP. Thr209 is a binding site for substrate.

This sequence belongs to the type III pantothenate kinase family. As to quaternary structure, homodimer. Requires NH4(+) as cofactor. K(+) is required as a cofactor.

The protein localises to the cytoplasm. It catalyses the reaction (R)-pantothenate + ATP = (R)-4'-phosphopantothenate + ADP + H(+). The protein operates within cofactor biosynthesis; coenzyme A biosynthesis; CoA from (R)-pantothenate: step 1/5. Catalyzes the phosphorylation of pantothenate (Pan), the first step in CoA biosynthesis. In Paraburkholderia phymatum (strain DSM 17167 / CIP 108236 / LMG 21445 / STM815) (Burkholderia phymatum), this protein is Type III pantothenate kinase.